The sequence spans 247 residues: Flagellar brake protein YcgR 2 (247 aa).

Positions 124–237 (QRREYFRVET…DETRIQRYIA (114 aa)) constitute a PilZ domain.

The protein belongs to the YcgR family. In terms of assembly, monomer. Interacts with the flagellar basal bodies.

It is found in the bacterial flagellum basal body. Its function is as follows. Acts as a flagellar brake, regulating swimming and swarming in a bis-(3'-5') cyclic diguanylic acid (c-di-GMP)-dependent manner. Binds 1 c-di-GMP dimer per subunit. Increasing levels of c-di-GMP lead to decreased motility. This is Flagellar brake protein YcgR 2 from Dechloromonas aromatica (strain RCB).